The chain runs to 190 residues: Class III hydrophobin F (190 aa).

A signal peptide spans 1–18 (MRPITILCTLATLSTTLA). Intrachain disulfides connect Cys54–Cys115, Cys62–Cys109, Cys63–Cys97, and Cys116–Cys131.

It belongs to the fungal hydrophobin family. As to quaternary structure, self-assembles to form functional amyloid fibrils called rodlets. Self-assembly into fibrillar rodlets occurs spontaneously at hydrophobic:hydrophilic interfaces and the rodlets further associate laterally to form amphipathic monolayers.

Its subcellular location is the secreted. The protein resides in the cell wall. Its function is as follows. Aerial growth, conidiation, and dispersal of filamentous fungi in the environment rely upon a capability of their secreting small amphipathic proteins called hydrophobins (HPBs) with low sequence identity. Class I can self-assemble into an outermost layer of rodlet bundles on aerial cell surfaces, conferring cellular hydrophobicity that supports fungal growth, development and dispersal; whereas Class II form highly ordered films at water-air interfaces through intermolecular interactions but contribute nothing to the rodlet structure. RodF and rodG belong to Class III, which contains hydrophobins with intermediate (between classes I and II) or atypical characteristics. RodF, unlike rodA, is not required for rodlet formation. The chain is Class III hydrophobin F from Aspergillus fumigatus (strain ATCC MYA-4609 / CBS 101355 / FGSC A1100 / Af293) (Neosartorya fumigata).